The primary structure comprises 156 residues: MPRKGPVSKRSVLPDPKFGSHLMTKFINRLMHDGKKGVAENLFYQAVEVLAEKSGEDPLKAFEKAIGNVKPHMEVKPRRVGGATYQVPMEVRPERQVTLALRWLINQARARGEKGMADKLSGELLDAYHNRGGAVKKKEDTHRMADANKAFAHYRW.

It belongs to the universal ribosomal protein uS7 family. In terms of assembly, part of the 30S ribosomal subunit. Contacts proteins S9 and S11.

In terms of biological role, one of the primary rRNA binding proteins, it binds directly to 16S rRNA where it nucleates assembly of the head domain of the 30S subunit. Is located at the subunit interface close to the decoding center, probably blocks exit of the E-site tRNA. This is Small ribosomal subunit protein uS7 from Solidesulfovibrio magneticus (strain ATCC 700980 / DSM 13731 / RS-1) (Desulfovibrio magneticus).